Here is a 210-residue protein sequence, read N- to C-terminus: MDDEEETYRLWKIRKTIMQLCHDRGYLVTQDELDQTLEEFKAQSGDKPSEGRPRRTDLTVLVAHNDDPTDQMFVFFPEEPKVGIKTIKVYCQRMQEENITRALIVVQQGMTPSAKQSLVDMAPKYILEQFLQQELLINITEHELVPEHVVMTKEEVTELLARYKLRENQLPRIQAGDPVARYFGIKRGQVVKIIRPSETAGRYITYRLVQ.

Met1 carries the post-translational modification N-acetylmethionine. Lys81 is covalently cross-linked (Glycyl lysine isopeptide (Lys-Gly) (interchain with G-Cter in SUMO2)).

The protein belongs to the archaeal Rpo5/eukaryotic RPB5 RNA polymerase subunit family. In terms of assembly, component of the RNA polymerase I (Pol I), RNA polymerase II (Pol II) and RNA polymerase III (Pol III) complexes consisting of at least 13, 12 and 17 subunits, respectively. Pol I complex consists of a ten-subunit catalytic core composed of POLR1A/RPA1, POLR1B/RPA2, POLR1C/RPAC1, POLR1D/RPAC2, POLR1H/RPA12, POLR2E/RPABC1, POLR2F/RPABC2, POLR2H/RPABC3, POLR2K/RPABC4 and POLR2L/RPABC5; a mobile stalk subunit POLR1F/RPA43 protruding from the core and additional subunits homologous to general transcription factors POLR1E/RPA49 and POLR1G/RPA34. Part of Pol I pre-initiation complex (PIC), in which Pol I core assembles with RRN3 and promoter-bound UTBF and SL1/TIF-IB complex. Pol II complex contains a ten-subunit catalytic core composed of POLR2A/RPB1, POLR2B/RPB2, POLR2C/RPB3, POLR2I/RPB9, POLR2J/RPB11, POLR2E/RPABC1, POLR2F/RPABC2, POLR2H/RPABC3, POLR2K/RPABC4 and POLR2L/RPABC5 and a mobile stalk composed of two subunits POLR2D/RPB4 and POLR2G/RPB7. Part of Pol II(G) complex, in which Pol II core associates with an additional subunit POLR2M; unlike conventional Pol II, Pol II(G) functions as a transcriptional repressor. Part of TBP-based Pol II pre-initiation complex (PIC), in which Pol II core assembles with general transcription factors and other specific initiation factors including GTF2E1, GTF2E2, GTF2F1, GTF2F2, TCEA1, ERCC2, ERCC3, GTF2H2, GTF2H3, GTF2H4, GTF2H5, GTF2A1, GTF2A2, GTF2B and TBP; this large multi-subunit PIC complex mediates DNA unwinding and targets Pol II core to the transcription start site where the first phosphodiester bond forms. In Pol II complex, this subunit is present in 2-fold molar excess over the other subunits. Pol III complex consists of a ten-subunit catalytic core composed of POLR3A/RPC1, POLR3B/RPC2, POLR1C/RPAC1, POLR1D/RPAC2, POLR3K/RPC10, POLR2E/RPABC1, POLR2F/RPABC2, POLR2H/RPABC3, POLR2K/RPABC4 and POLR2L/RPABC5; a mobile stalk composed of two subunits POLR3H/RPC8 and CRCP/RPC9, protruding from the core and functioning primarily in transcription initiation; and additional subunits homologous to general transcription factors of the RNA polymerase II machinery, POLR3C/RPC3-POLR3F/RPC6-POLR3G/RPC7 heterotrimer required for transcription initiation and POLR3D/RPC4-POLR3E/RPC5 heterodimer involved in both transcription initiation and termination. Component of the PAQosome complex which is responsible for the biogenesis of several protein complexes and which consists of R2TP complex members RUVBL1, RUVBL2, RPAP3 and PIH1D1, URI complex members PFDN2, PFDN6, PDRG1, UXT and URI1 as well as ASDURF, POLR2E and DNAAF10/WDR92. Interacts with URI1. (Microbial infection) Interacts with HBV protein X.

It localises to the nucleus. The protein resides in the nucleolus. Functionally, DNA-dependent RNA polymerase catalyzes the transcription of DNA into RNA using the four ribonucleoside triphosphates as substrates. Common component of RNA polymerases I, II and III which synthesize ribosomal RNA precursors, mRNA precursors and many functional non-coding RNAs, and small RNAs, such as 5S rRNA and tRNAs, respectively. Pol II is the central component of the basal RNA polymerase II transcription machinery. Pols are composed of mobile elements that move relative to each other. In Pol II, POLR2E/RPABC1 is part of the lower jaw surrounding the central large cleft and thought to grab the incoming DNA template. The polypeptide is DNA-directed RNA polymerases I, II, and III subunit RPABC1 (Homo sapiens (Human)).